An 85-amino-acid chain; its full sequence is Large ribosomal subunit protein eL43 (85 aa).

Zn(2+) is bound by residues Cys-32, Cys-35, Cys-50, and Cys-53. The C4-type zinc finger occupies 32-53; it reads CTFCGKTKMKRRAVGIWHCGSC.

This sequence belongs to the eukaryotic ribosomal protein eL43 family. In terms of assembly, component of the large ribosomal subunit.

Its subcellular location is the cytoplasm. Its function is as follows. Component of the large ribosomal subunit. The ribosome is a large ribonucleoprotein complex responsible for the synthesis of proteins in the cell. The sequence is that of Large ribosomal subunit protein eL43 (rpl37a) from Myxine glutinosa (Atlantic hagfish).